Here is a 392-residue protein sequence, read N- to C-terminus: Small ribosomal subunit protein bS1 (392 aa).

S1 motif domains lie at 16 to 90, 108 to 173, 194 to 262, and 279 to 348; these read GDKV…LSKR, DEII…LSRK, GDVI…LSIK, and DDVI…LSIK.

It belongs to the bacterial ribosomal protein bS1 family.

Functionally, binds mRNA; thus facilitating recognition of the initiation point. It is needed to translate mRNA with a short Shine-Dalgarno (SD) purine-rich sequence. This chain is Small ribosomal subunit protein bS1 (rpsA), found in Staphylococcus haemolyticus (strain JCSC1435).